A 259-amino-acid chain; its full sequence is Global transcriptional regulator CodY (259 aa).

A GAF domain region spans residues 1–155 (MNLLEKTRKI…GATVVGMEIL (155 aa)). A DNA-binding region (H-T-H motif) is located at residues 203–222 (ASKIADRVGITRSVIVNALR). S215 is modified (phosphoserine).

It belongs to the CodY family.

It localises to the cytoplasm. Functionally, DNA-binding global transcriptional regulator which is involved in the adaptive response to starvation and acts by directly or indirectly controlling the expression of numerous genes in response to nutrient availability. During rapid exponential growth, CodY is highly active and represses genes whose products allow adaptation to nutrient depletion. The sequence is that of Global transcriptional regulator CodY from Anoxybacillus flavithermus (strain DSM 21510 / WK1).